The following is a 222-amino-acid chain: N-(5'-phosphoribosyl)anthranilate isomerase (222 aa).

The protein belongs to the TrpF family.

It carries out the reaction N-(5-phospho-beta-D-ribosyl)anthranilate = 1-(2-carboxyphenylamino)-1-deoxy-D-ribulose 5-phosphate. It participates in amino-acid biosynthesis; L-tryptophan biosynthesis; L-tryptophan from chorismate: step 3/5. This is N-(5'-phosphoribosyl)anthranilate isomerase from Xanthomonas campestris pv. campestris (strain 8004).